Here is a 453-residue protein sequence, read N- to C-terminus: Probable phenylalanine--tRNA ligase, mitochondrial (453 aa).

The transit peptide at 1-27 (MLLTLRVQGARHWLKSTRCLASSAAPA) directs the protein to the mitochondrion. Residues 142 to 145 (TAHQ), Arg-164, 171 to 173 (THY), 178 to 180 (QAD), Glu-285, and Phe-310 each bind substrate. In terms of domain architecture, FDX-ACB spans 356–453 (SHYPQCTNDL…SVDSFNVQIR (98 aa)).

The protein belongs to the class-II aminoacyl-tRNA synthetase family.

The protein resides in the mitochondrion matrix. It catalyses the reaction tRNA(Phe) + L-phenylalanine + ATP = L-phenylalanyl-tRNA(Phe) + AMP + diphosphate + H(+). In terms of biological role, is responsible for the charging of tRNA(Phe) with phenylalanine in mitochondrial translation. This Drosophila melanogaster (Fruit fly) protein is Probable phenylalanine--tRNA ligase, mitochondrial.